We begin with the raw amino-acid sequence, 179 residues long: uncharacterized protein (179 aa).

Residues 1–14 (MTKKVKLDQDEINN) are compositionally biased toward basic and acidic residues. 2 disordered regions span residues 1–90 (MTKK…NNFC) and 121–147 (HKKS…DKKV). 2 stretches are compositionally biased toward low complexity: residues 15 to 90 (KNKN…NNFC) and 126 to 137 (RSQSQSSLNSFD). Positions 138–147 (QDNKSKDKKV) are enriched in basic and acidic residues.

This is an uncharacterized protein from Dictyostelium discoideum (Social amoeba).